The chain runs to 466 residues: 3-isopropylmalate dehydratase large subunit (466 aa).

The [4Fe-4S] cluster site is built by cysteine 345, cysteine 405, and cysteine 408.

This sequence belongs to the aconitase/IPM isomerase family. LeuC type 1 subfamily. As to quaternary structure, heterodimer of LeuC and LeuD. The cofactor is [4Fe-4S] cluster.

It carries out the reaction (2R,3S)-3-isopropylmalate = (2S)-2-isopropylmalate. Its pathway is amino-acid biosynthesis; L-leucine biosynthesis; L-leucine from 3-methyl-2-oxobutanoate: step 2/4. Its function is as follows. Catalyzes the isomerization between 2-isopropylmalate and 3-isopropylmalate, via the formation of 2-isopropylmaleate. The sequence is that of 3-isopropylmalate dehydratase large subunit from Microcystis aeruginosa (strain NIES-843 / IAM M-2473).